The chain runs to 1403 residues: DNA-directed RNA polymerase subunit beta' (1403 aa).

4 residues coordinate Zn(2+): cysteine 71, cysteine 73, cysteine 86, and cysteine 89. Aspartate 462, aspartate 464, and aspartate 466 together coordinate Mg(2+). 4 residues coordinate Zn(2+): cysteine 820, cysteine 893, cysteine 900, and cysteine 903.

This sequence belongs to the RNA polymerase beta' chain family. As to quaternary structure, the RNAP catalytic core consists of 2 alpha, 1 beta, 1 beta' and 1 omega subunit. When a sigma factor is associated with the core the holoenzyme is formed, which can initiate transcription. Mg(2+) serves as cofactor. Zn(2+) is required as a cofactor.

The enzyme catalyses RNA(n) + a ribonucleoside 5'-triphosphate = RNA(n+1) + diphosphate. DNA-dependent RNA polymerase catalyzes the transcription of DNA into RNA using the four ribonucleoside triphosphates as substrates. The protein is DNA-directed RNA polymerase subunit beta' of Methylobacterium radiotolerans (strain ATCC 27329 / DSM 1819 / JCM 2831 / NBRC 15690 / NCIMB 10815 / 0-1).